Consider the following 618-residue polypeptide: Beta-xylosidase (618 aa).

2 disordered regions span residues 76–100 (ERDRYTTDESDSGSSERHSVQQEES) and 463–509 (LEPQ…PPIQ).

The protein belongs to the glycosyl hydrolase 52 family.

Its subcellular location is the secreted. The enzyme catalyses Hydrolysis of (1-&gt;4)-beta-D-xylans, to remove successive D-xylose residues from the non-reducing termini.. It participates in glycan degradation; xylan degradation. The chain is Beta-xylosidase (xylA) from Geobacillus stearothermophilus (Bacillus stearothermophilus).